The following is a 434-amino-acid chain: Xylose isomerase (434 aa).

Residues His100 and Asp103 contribute to the active site. Mg(2+)-binding residues include Glu231, Glu267, His270, Asp295, Asp306, Asp308, and Asp338.

Belongs to the xylose isomerase family. In terms of assembly, homotetramer. The cofactor is Mg(2+).

The protein resides in the cytoplasm. It catalyses the reaction alpha-D-xylose = alpha-D-xylulofuranose. The sequence is that of Xylose isomerase from Ruegeria pomeroyi (strain ATCC 700808 / DSM 15171 / DSS-3) (Silicibacter pomeroyi).